Here is a 214-residue protein sequence, read N- to C-terminus: 3-isopropylmalate dehydratase small subunit (214 aa).

It belongs to the LeuD family. LeuD type 1 subfamily. As to quaternary structure, heterodimer of LeuC and LeuD.

It catalyses the reaction (2R,3S)-3-isopropylmalate = (2S)-2-isopropylmalate. It functions in the pathway amino-acid biosynthesis; L-leucine biosynthesis; L-leucine from 3-methyl-2-oxobutanoate: step 2/4. Functionally, catalyzes the isomerization between 2-isopropylmalate and 3-isopropylmalate, via the formation of 2-isopropylmaleate. The polypeptide is 3-isopropylmalate dehydratase small subunit (Pseudomonas entomophila (strain L48)).